A 675-amino-acid polypeptide reads, in one-letter code: Methionine--tRNA ligase (675 aa).

The 'HIGH' region motif lies at 15 to 25 (PYANGSIHLGH). Residues cysteine 146, cysteine 149, cysteine 159, and cysteine 162 each coordinate Zn(2+). A 'KMSKS' region motif is present at residues 332 to 336 (KMSKS). Lysine 335 contacts ATP. The 103-residue stretch at 573–675 (DFAKVDMRIA…SGAQPGMQVK (103 aa)) folds into the tRNA-binding domain.

It belongs to the class-I aminoacyl-tRNA synthetase family. MetG type 1 subfamily. As to quaternary structure, homodimer. Requires Zn(2+) as cofactor.

Its subcellular location is the cytoplasm. The enzyme catalyses tRNA(Met) + L-methionine + ATP = L-methionyl-tRNA(Met) + AMP + diphosphate. In terms of biological role, is required not only for elongation of protein synthesis but also for the initiation of all mRNA translation through initiator tRNA(fMet) aminoacylation. This Yersinia pseudotuberculosis serotype IB (strain PB1/+) protein is Methionine--tRNA ligase.